We begin with the raw amino-acid sequence, 32 residues long: Cytochrome b6-f complex subunit 7 (32 aa).

The chain crosses the membrane as a helical span at residues 9–27 (AALFWVLIPLGLAGGALLL).

The protein belongs to the PetM family. The 4 large subunits of the cytochrome b6-f complex are cytochrome b6, subunit IV (17 kDa polypeptide, PetD), cytochrome f and the Rieske protein, while the 4 small subunits are PetG, PetL, PetM and PetN. The complex functions as a dimer.

It is found in the cellular thylakoid membrane. In terms of biological role, component of the cytochrome b6-f complex, which mediates electron transfer between photosystem II (PSII) and photosystem I (PSI), cyclic electron flow around PSI, and state transitions. This chain is Cytochrome b6-f complex subunit 7, found in Synechococcus sp. (strain RCC307).